The sequence spans 230 residues: Ribosomal RNA small subunit methyltransferase G (230 aa).

S-adenosyl-L-methionine is bound by residues G95, F100, 146-147 (GE), and R159.

The protein belongs to the methyltransferase superfamily. RNA methyltransferase RsmG family.

The protein localises to the cytoplasm. Its function is as follows. Specifically methylates the N7 position of a guanine in 16S rRNA. The protein is Ribosomal RNA small subunit methyltransferase G of Parabacteroides distasonis (strain ATCC 8503 / DSM 20701 / CIP 104284 / JCM 5825 / NCTC 11152).